The primary structure comprises 231 residues: MAKLTKRQKQIRERVDGNHAYPVDEALALVKELATARFPESIDVAVNLGVDPRKSDQIVRGSTVLPNGTGKSMRVAVFAQGENADAAQAEGADAVGMDDLAERMQGGELDYDVVIASPDAMGVVGKLGPVLGPRGLMPNPKTGTVSADVAGAVRNAKAGQVRYRTDRGGVIHSAIGRANFDEQALRENLDALLADLNKLKPSTSKGVYIKGITVSSTMGAGVRVDRATLGV.

This sequence belongs to the universal ribosomal protein uL1 family. In terms of assembly, part of the 50S ribosomal subunit.

In terms of biological role, binds directly to 23S rRNA. The L1 stalk is quite mobile in the ribosome, and is involved in E site tRNA release. Functionally, protein L1 is also a translational repressor protein, it controls the translation of the L11 operon by binding to its mRNA. This Halorhodospira halophila (strain DSM 244 / SL1) (Ectothiorhodospira halophila (strain DSM 244 / SL1)) protein is Large ribosomal subunit protein uL1.